A 424-amino-acid polypeptide reads, in one-letter code: ATP-sensitive inward rectifier potassium channel 8 (424 aa).

Topologically, residues 1-69 are cytoplasmic; it reads MLARKSIIPE…IFTTLVDLKW (69 aa). Phosphoserine is present on serine 6. A helical transmembrane segment spans residues 70 to 94; it reads RHTLVIFTMSFLCSWLLFAIMWWLV. At 95-126 the chain is on the extracellular side; the sequence is AFAHGDIYAYMEKGITEKSGLESAVCVTNVRS. Positions 127–138 form an intramembrane region, helical; Pore-forming; the sequence is FTSAFLFSIEVQ. An intramembrane region (pore-forming) is located at residues 139–145; it reads VTIGFGG. A Selectivity filter motif is present at residues 140–145; it reads TIGFGG. The Extracellular segment spans residues 146–154; the sequence is RMMTEECPL. A helical membrane pass occupies residues 155-176; it reads AITVLILQNIVGLIINAVMLGC. The Cytoplasmic segment spans residues 177-424; it reads IFMKTAQAHR…PEGNQCPSES (248 aa). A disordered region spans residues 374-424; it reads LSHQNSLRKRNSMRRNNSMRRSNSIRRNNSSLMVPKVQFMTPEGNQCPSES. Over residues 387-404 the composition is skewed to low complexity; sequence RRNNSMRRSNSIRRNNSS.

The protein belongs to the inward rectifier-type potassium channel (TC 1.A.2.1) family. KCNJ8 subfamily. As to quaternary structure, interacts with ABCC9. Widely expressed, including in pancreatic islets, pituitary, skeletal muscle and heart.

The protein localises to the membrane. It carries out the reaction K(+)(in) = K(+)(out). Its function is as follows. Inward rectifier potassium channels are characterized by a greater tendency to allow potassium to flow into the cell rather than out of it. Their voltage dependence is regulated by the concentration of extracellular potassium; as external potassium is raised, the voltage range of the channel opening shifts to more positive voltages. The inward rectification is mainly due to the blockage of outward current by internal magnesium. This channel is activated by internal ATP and can be blocked by external barium. Can form a sulfonyllurea-sensitive but ATP-insensitive potassium channel with ABCC9. The polypeptide is ATP-sensitive inward rectifier potassium channel 8 (Kcnj8) (Rattus norvegicus (Rat)).